The chain runs to 470 residues: Proline--tRNA ligase (470 aa).

It belongs to the class-II aminoacyl-tRNA synthetase family. ProS type 3 subfamily. In terms of assembly, homodimer.

It localises to the cytoplasm. It catalyses the reaction tRNA(Pro) + L-proline + ATP = L-prolyl-tRNA(Pro) + AMP + diphosphate. Catalyzes the attachment of proline to tRNA(Pro) in a two-step reaction: proline is first activated by ATP to form Pro-AMP and then transferred to the acceptor end of tRNA(Pro). The sequence is that of Proline--tRNA ligase from Malacoplasma penetrans (strain HF-2) (Mycoplasma penetrans).